The chain runs to 354 residues: Elongation factor Ts (354 aa).

The interval 81–84 (TDFV) is involved in Mg(2+) ion dislocation from EF-Tu.

It belongs to the EF-Ts family.

It localises to the cytoplasm. In terms of biological role, associates with the EF-Tu.GDP complex and induces the exchange of GDP to GTP. It remains bound to the aminoacyl-tRNA.EF-Tu.GTP complex up to the GTP hydrolysis stage on the ribosome. The chain is Elongation factor Ts from Campylobacter fetus subsp. fetus (strain 82-40).